Reading from the N-terminus, the 289-residue chain is G1/S-specific cyclin-D2 (289 aa).

The region spanning 26–151 (LQNLLTIEER…VLGKLKWNLA (126 aa)) is the Cyclin N-terminal domain. Positions 264–289 (QHNAGSKSVEDPDQATTPTDVRDVDL) are disordered. Serine 271 bears the Phosphoserine mark. At threonine 280 the chain carries Phosphothreonine.

This sequence belongs to the cyclin family. Cyclin D subfamily. Interacts with either CDK4 or CDK6 protein kinase to form a serine/threonine kinase holoenzyme complex. The cyclin subunit imparts substrate specificity to the complex. In terms of processing, phosphorylation at Thr-280 by MAP kinases is required for ubiquitination and degradation by the DCX(AMBRA1) complex. Ubiquitinated by the DCX(AMBRA1) complex during the transition from G1 to S cell phase, leading to its degradation: ubiquitination is dependent on Thr-280 phosphorylation. The DCX(AMBRA1) complex represents the major regulator of CCND2 stability during the G1/S transition. Polyubiquitinated by the SCF(FBXL2) complex, leading to proteasomal degradation.

It localises to the nucleus. The protein resides in the cytoplasm. The protein localises to the nucleus membrane. In terms of biological role, regulatory component of the cyclin D2-CDK4 (DC) complex that phosphorylates and inhibits members of the retinoblastoma (RB) protein family including RB1 and regulates the cell-cycle during G(1)/S transition. Phosphorylation of RB1 allows dissociation of the transcription factor E2F from the RB/E2F complex and the subsequent transcription of E2F target genes which are responsible for the progression through the G(1) phase. Hypophosphorylates RB1 in early G(1) phase. Cyclin D-CDK4 complexes are major integrators of various mitogenenic and antimitogenic signals. The protein is G1/S-specific cyclin-D2 of Mus musculus (Mouse).